Consider the following 79-residue polypeptide: Large ribosomal subunit protein bL28 (79 aa).

It belongs to the bacterial ribosomal protein bL28 family.

The chain is Large ribosomal subunit protein bL28 from Blochmanniella floridana.